Reading from the N-terminus, the 247-residue chain is LOB domain-containing protein 38 (247 aa).

The LOB domain occupies M1 to L107. A compositionally biased stretch (low complexity) spans F157–P170. The interval F157 to S184 is disordered.

It belongs to the LOB domain-containing protein family. In terms of tissue distribution, expressed in young shoots, roots, stems, leaves and flowers.

The protein is LOB domain-containing protein 38 (LBD38) of Arabidopsis thaliana (Mouse-ear cress).